We begin with the raw amino-acid sequence, 444 residues long: Trigger factor (444 aa).

Residues 166–251 (GDQVVIDFKG…VKAVKAPKAA (86 aa)) enclose the PPIase FKBP-type domain.

Belongs to the FKBP-type PPIase family. Tig subfamily.

It localises to the cytoplasm. It catalyses the reaction [protein]-peptidylproline (omega=180) = [protein]-peptidylproline (omega=0). In terms of biological role, involved in protein export. Acts as a chaperone by maintaining the newly synthesized protein in an open conformation. Functions as a peptidyl-prolyl cis-trans isomerase. This is Trigger factor from Cereibacter sphaeroides (strain ATCC 17029 / ATH 2.4.9) (Rhodobacter sphaeroides).